A 161-amino-acid chain; its full sequence is Small ribosomal subunit protein uS19 (161 aa).

Basic residues predominate over residues 1–19 (MARQKKYSGKGGARKKNKQ). The tract at residues 1–26 (MARQKKYSGKGGARKKNKQKQSVAPR) is disordered.

This sequence belongs to the universal ribosomal protein uS19 family.

Functionally, protein S19 forms a complex with S13 that binds strongly to the 16S ribosomal RNA. The protein is Small ribosomal subunit protein uS19 of Methanococcus maripaludis (strain C7 / ATCC BAA-1331).